A 166-amino-acid polypeptide reads, in one-letter code: Small ribosomal subunit protein bS6 (166 aa).

Composition is skewed to basic and acidic residues over residues 96 to 142 (HEEG…DRPP) and 149 to 166 (GGDR…GGAE). Residues 96 to 166 (HEEGPSAMMQ…PREGFEGGAE (71 aa)) are disordered.

Belongs to the bacterial ribosomal protein bS6 family.

Binds together with bS18 to 16S ribosomal RNA. The protein is Small ribosomal subunit protein bS6 of Mesorhizobium japonicum (strain LMG 29417 / CECT 9101 / MAFF 303099) (Mesorhizobium loti (strain MAFF 303099)).